Reading from the N-terminus, the 147-residue chain is Hemoglobin subunit beta (147 aa).

In terms of domain architecture, Globin spans 3 to 147 (NWTKTEKATI…VMSALGKQYH (145 aa)). Residues His-64 and His-93 each contribute to the heme b site.

Belongs to the globin family. In terms of assembly, heterotetramer of two alpha chains and two beta chains. As to expression, red blood cells.

Functionally, involved in oxygen transport from gills to the various peripheral tissues. The chain is Hemoglobin subunit beta (hbb) from Gymnodraco acuticeps (Antarctic dragonfish).